The chain runs to 238 residues: Enoyl-CoA delta isomerase 3 (238 aa).

The protein belongs to the enoyl-CoA hydratase/isomerase family.

It is found in the cytoplasm. The protein localises to the nucleus. It catalyses the reaction a (3Z)-enoyl-CoA = a 4-saturated (2E)-enoyl-CoA. It carries out the reaction a (3E)-enoyl-CoA = a 4-saturated (2E)-enoyl-CoA. It participates in lipid metabolism; fatty acid beta-oxidation. Its function is as follows. Able to isomerize both 3-cis and 3-trans double bonds into the 2-trans form in a range of enoyl-CoA species. Essential for the beta oxidation of unsaturated fatty acids. The polypeptide is Enoyl-CoA delta isomerase 3 (Arabidopsis thaliana (Mouse-ear cress)).